Here is a 493-residue protein sequence, read N- to C-terminus: Ferruginol synthase 1 (493 aa).

The helical transmembrane segment at 2 to 22 (DSFPLLAALFFILAATWFISF) threads the bilayer. C437 is a heme binding site.

The protein belongs to the cytochrome P450 family. The cofactor is heme. Expressed in leaf glandular trichomes.

It localises to the membrane. The catalysed reaction is abieta-8,11,13-triene + reduced [NADPH--hemoprotein reductase] + O2 = ferruginol + oxidized [NADPH--hemoprotein reductase] + H2O + H(+). The enzyme catalyses ferruginol + reduced [NADPH--hemoprotein reductase] + O2 = 11-hydroxyferruginol + oxidized [NADPH--hemoprotein reductase] + H2O + H(+). It catalyses the reaction miltiradiene + 2 reduced [NADPH--hemoprotein reductase] + 2 O2 = 11-oxomiltiradiene + 2 oxidized [NADPH--hemoprotein reductase] + 3 H2O + 2 H(+). It functions in the pathway secondary metabolite biosynthesis; terpenoid biosynthesis. Monooxygenase involved in the biosynthesis of labdane-related diterpenes natural products. Catalyzes the oxidation of abietatriene to produce ferruginol. Catalyzes the oxidation of ferruginol at C-12 to produce 11-hydroxyferruginol. Ferruginol and 11-hydroxyferruginol are intermediates in the biosynthesis of carnosate, a potent antioxidant. May also convert miltiradiene into 11-oxomiltiradiene. The sequence is that of Ferruginol synthase 1 from Rosmarinus officinalis (Rosemary).